We begin with the raw amino-acid sequence, 262 residues long: UDP-2,3-diacylglucosamine hydrolase (262 aa).

Positions 10, 12, 47, 86, 121, 218, and 220 each coordinate Mn(2+).

Belongs to the LpxH family. It depends on Mn(2+) as a cofactor.

Its subcellular location is the cell inner membrane. The protein resides in the cytoplasm. The enzyme catalyses UDP-2-N,3-O-bis[(3R)-3-hydroxytetradecanoyl]-alpha-D-glucosamine + H2O = 2-N,3-O-bis[(3R)-3-hydroxytetradecanoyl]-alpha-D-glucosaminyl 1-phosphate + UMP + 2 H(+). The protein operates within glycolipid biosynthesis; lipid IV(A) biosynthesis; lipid IV(A) from (3R)-3-hydroxytetradecanoyl-[acyl-carrier-protein] and UDP-N-acetyl-alpha-D-glucosamine: step 4/6. In terms of biological role, hydrolyzes the pyrophosphate bond of UDP-2,3-diacylglucosamine to yield 2,3-diacylglucosamine 1-phosphate (lipid X) and UMP by catalyzing the attack of water at the alpha-P atom. Involved in the biosynthesis of lipid A, a phosphorylated glycolipid that anchors the lipopolysaccharide to the outer membrane of the cell. The chain is UDP-2,3-diacylglucosamine hydrolase from Porphyromonas gingivalis (strain ATCC BAA-308 / W83).